We begin with the raw amino-acid sequence, 418 residues long: Adenosylhomocysteinase (418 aa).

Thr53, Asp125, and Glu150 together coordinate substrate. 151 to 153 contributes to the NAD(+) binding site; the sequence is TTT. The substrate site is built by Lys180 and Asp184. NAD(+) contacts are provided by residues Asn185, 214-219, Glu237, Asn272, 293-295, and Asn340; these read GYGWCG and SGH.

The protein belongs to the adenosylhomocysteinase family. NAD(+) serves as cofactor.

Its subcellular location is the cytoplasm. The catalysed reaction is S-adenosyl-L-homocysteine + H2O = L-homocysteine + adenosine. It participates in amino-acid biosynthesis; L-homocysteine biosynthesis; L-homocysteine from S-adenosyl-L-homocysteine: step 1/1. Functionally, may play a key role in the regulation of the intracellular concentration of adenosylhomocysteine. The sequence is that of Adenosylhomocysteinase from Aquifex aeolicus (strain VF5).